A 344-amino-acid chain; its full sequence is Phenylalanine--tRNA ligase alpha subunit (344 aa).

Glutamate 259 contributes to the Mg(2+) binding site.

Belongs to the class-II aminoacyl-tRNA synthetase family. Phe-tRNA synthetase alpha subunit type 1 subfamily. As to quaternary structure, tetramer of two alpha and two beta subunits. It depends on Mg(2+) as a cofactor.

It localises to the cytoplasm. It catalyses the reaction tRNA(Phe) + L-phenylalanine + ATP = L-phenylalanyl-tRNA(Phe) + AMP + diphosphate + H(+). The sequence is that of Phenylalanine--tRNA ligase alpha subunit from Nitrosospira multiformis (strain ATCC 25196 / NCIMB 11849 / C 71).